The sequence spans 472 residues: Membrane-bound acylglycerophosphatidylinositol O-acyltransferase MBOAT7 (472 aa).

Topologically, residues 1-5 are cytoplasmic; that stretch reads MSPEE. Residues 6–22 traverse the membrane as a helical segment; the sequence is WTYLVVLLISIPIGFLF. Topologically, residues 23 to 33 are lumenal; the sequence is KKAGPGLKRWG. The chain crosses the membrane as a helical span at residues 34–57; the sequence is AAAVGLGLTLFTCGPHTLHSLVTI. The Cytoplasmic portion of the chain corresponds to 58–73; that stretch reads LGTWALIQAQPCSCHA. Residues 74–93 traverse the membrane as a helical segment; it reads LALAWTFSYLLFFRALSLLG. Residues 94-194 lie on the Lumenal side of the membrane; the sequence is LPTPTPFTNA…VPSLRPLLRR (101 aa). Residues 195–212 form a helical membrane-spanning segment; sequence AWPAPLFGLLFLLSSHLF. At 213–231 the chain is on the cytoplasmic side; it reads PLEAVREDAFYARPLPARL. Residues 232–261 traverse the membrane as a helical segment; the sequence is FYMIPVFFAFRMRFYVAWIAAECGCIAAGF. Over 262–426 the chain is Lumenal; that stretch reads GAYPVAAKAR…LSLADTLRYW (165 aa). N-linked (GlcNAc...) asparagine glycosylation is present at asparagine 321. A helical transmembrane segment spans residues 427–447; sequence ASIYFCIHFLALAALGLGLAL. The Cytoplasmic portion of the chain corresponds to 448 to 472; that stretch reads GGGSPSRRKAASQPTSLAPEKLREE. The segment at 453-472 is disordered; that stretch reads SRRKAASQPTSLAPEKLREE.

The protein belongs to the membrane-bound acyltransferase family. As to quaternary structure, interacts with SPTSSA; the interaction facilitates MBOAT7 location to mitochondria-associated membranes (MAMs). Overexpressed in metastatic breast and bladder carcinomas relative to normal breast epithelium and urothelium.

The protein resides in the endoplasmic reticulum membrane. It catalyses the reaction a 1-acyl-sn-glycero-3-phospho-(1D-myo-inositol) + (5Z,8Z,11Z,14Z)-eicosatetraenoyl-CoA = a 1-acyl-2-(5Z,8Z,11Z,14Z-eicosatetraenoyl)-sn-glycero-3-phospho-(1D-myo-inositol) + CoA. The catalysed reaction is (5Z,8Z,11Z,14Z)-eicosatetraenoyl-CoA + 1-hexadecanoyl-sn-glycero-3-phosphocholine = 1-hexadecanoyl-2-(5Z,8Z,11Z,14Z-eicosatetraenoyl)-sn-glycero-3-phosphocholine + CoA. It carries out the reaction a 1-acyl-sn-glycero-3-phospho-(1D-myo-inositol) + an acyl-CoA = a 1,2-diacyl-sn-glycero-3-phospho-(1D-myo-inositol) + CoA. The enzyme catalyses 1-octadecanoyl-sn-glycero-3-phospho-(1D-myo-inositol) + (5Z,8Z,11Z,14Z)-eicosatetraenoyl-CoA = 1-octadecanoyl-2-(5Z,8Z,11Z,14Z-eicosatetraenoyl)-sn-glycero-3-phospho-(1D-myo-inositol) + CoA. Its pathway is lipid metabolism; phospholipid metabolism. Its activity is regulated as follows. Activity is inhibited by thimerosal. In terms of biological role, acyltransferase which catalyzes the transfer of an acyl group from an acyl-CoA to a lysophosphatidylinositol (1-acylglycerophosphatidylinositol or LPI) leading to the production of a phosphatidylinositol (1,2-diacyl-sn-glycero-3-phosphoinositol or PI) and participates in the reacylation step of the phospholipid remodeling pathway also known as the Lands cycle. Prefers arachidonoyl-CoA as the acyl donor, thus contributing to the regulation of free levels arachidonic acid in cell. In liver, participates in the regulation of triglyceride metabolism through the phosphatidylinositol acyl-chain remodeling regulation. This is Membrane-bound acylglycerophosphatidylinositol O-acyltransferase MBOAT7 from Homo sapiens (Human).